A 251-amino-acid polypeptide reads, in one-letter code: BRI3-binding protein (251 aa).

4 helical membrane passes run 13 to 33 (AGLL…PGAQ), 125 to 145 (ALLL…TLGF), 146 to 166 (TFSV…VVLF), and 185 to 205 (VLPL…GFYW). The stretch at 217 to 247 (NPSVEEKLEHLEKQVRLLNIRLNRVLESLDR) forms a coiled coil. Lysine 229 carries the N6-acetyllysine modification. Position 248 is a phosphoserine (serine 248).

As to quaternary structure, interacts with LETMD1. Interacts with BRI3 (isoforms 1 and 2); the interaction with isoform 2 is weaker than with isoform 1. Interacts with BRI3; the interaction is weak. Interacts with TMEM238L. As to expression, most abundantly expressed in brain, liver and kidney. Overexpressed in leukemia and lymphoma cell lines, as well as in various carcinomas.

It is found in the mitochondrion outer membrane. Involved in tumorigenesis and may function by stabilizing p53/TP53. This Homo sapiens (Human) protein is BRI3-binding protein.